A 3079-amino-acid chain; its full sequence is Inhibitory regulator protein IRA2 (3079 aa).

A disordered region spans residues 392–554; that stretch reads NQNAHQGSSS…RASYDAHKTG (163 aa). Residues 399-416 show a composition bias toward low complexity; sequence SSSPSSSSPSSPPSSSSS. The span at 417-442 shows a compositional bias: polar residues; it reads DNNNQNIIAKSLSRQLSHHQSYIQQQ. Positions 449–477 are enriched in low complexity; it reads SSWTTNSQSSTSLSSSTSNSTTTDFSTHT. The span at 488–497 shows a compositional bias: polar residues; the sequence is DTPTMSNITI. A compositionally biased stretch (low complexity) spans 498–528; it reads SASSLLSQTPTPTTQLQQRLNSAAAAAAAAA. The span at 529-546 shows a compositional bias: polar residues; the sequence is SPSNSTPTGYTAEQQSRA. A Phosphothreonine modification is found at Thr-635. Disordered stretches follow at residues 867-898, 912-935, and 952-980; these read FKGS…PLGL, GSST…LSSD, and GPSS…VQRP. 2 stretches are compositionally biased toward low complexity: residues 873-894 and 921-934; these read SLCS…TPVS and NVNS…NLSS. Residues 961 to 980 show a composition bias toward polar residues; it reads IPTTLTSPPGTEKSSPVQRP. A Ras-GAP domain is found at 1717-1922; it reads NATHIVVAQL…DRIFRFLAEL (206 aa).

The protein resides in the cytoplasm. Functionally, inhibitory regulator of the Ras-cyclic AMP pathway. Stimulates the GTPase activity of Ras proteins. In Saccharomyces cerevisiae (strain ATCC 204508 / S288c) (Baker's yeast), this protein is Inhibitory regulator protein IRA2 (IRA2).